Here is a 48-residue protein sequence, read N- to C-terminus: Ambineela (48 aa).

In terms of assembly, monomer. In terms of processing, the blue color is due to an unidentified non-fluorescent cofactor, covalently bound to it.

Ambineela is a blue protein and has a pI of 8.7. This is Ambineela from Acidianus ambivalens (Desulfurolobus ambivalens).